A 145-amino-acid polypeptide reads, in one-letter code: Large ribosomal subunit protein uL11 (145 aa).

This sequence belongs to the universal ribosomal protein uL11 family. As to quaternary structure, part of the ribosomal stalk of the 50S ribosomal subunit. Interacts with L10 and the large rRNA to form the base of the stalk. L10 forms an elongated spine to which L12 dimers bind in a sequential fashion forming a multimeric L10(L12)X complex. One or more lysine residues are methylated.

Functionally, forms part of the ribosomal stalk which helps the ribosome interact with GTP-bound translation factors. In Corynebacterium glutamicum (strain ATCC 13032 / DSM 20300 / JCM 1318 / BCRC 11384 / CCUG 27702 / LMG 3730 / NBRC 12168 / NCIMB 10025 / NRRL B-2784 / 534), this protein is Large ribosomal subunit protein uL11.